A 344-amino-acid chain; its full sequence is L-rhamnose-proton symporter (344 aa).

Transmembrane regions (helical) follow at residues 4–24 (AITM…CFYA), 38–58 (WSVG…ALLL), 68–88 (FNLS…IGNI), 101–121 (MGIG…TPII), 137–157 (TLLG…AGQL), 175–195 (LLLA…MNAA), 214–234 (LPSY…FCFI), 259–279 (ILLS…YAWG), 290–310 (MSWM…GLVL), and 321–341 (VAVL…VGLG).

Belongs to the L-rhamnose transporter (TC 2.A.7.6) family.

The protein localises to the cell inner membrane. The catalysed reaction is L-rhamnopyranose(in) + H(+)(in) = L-rhamnopyranose(out) + H(+)(out). Functionally, uptake of L-rhamnose across the cytoplasmic membrane with the concomitant transport of protons into the cell (symport system). This chain is L-rhamnose-proton symporter, found in Salmonella paratyphi A (strain ATCC 9150 / SARB42).